Here is a 66-residue protein sequence, read N- to C-terminus: Ornithorhynchus venom defensin-like peptide A (66 aa).

Residues Met-1 to Ala-22 form the signal peptide. A propeptide spanning residues Glu-23–Pro-24 is cleaved from the precursor. Intrachain disulfides connect Cys-33-Cys-63, Cys-40-Cys-56, and Cys-48-Cys-64.

Produced by the crural gland and detected in venom from the spur located on each male hind leg. Is the only OvDLP that is expressed in venom gland alone.

The protein localises to the secreted. Its function is as follows. Does not show antimicrobial, myotoxic, hemolytic and cell-promoting activities. This is Ornithorhynchus venom defensin-like peptide A from Ornithorhynchus anatinus (Duckbill platypus).